The sequence spans 367 residues: MSVNRILVINPGSTSTKIGVFDNERPVLEETIRHDTGEIKKYKRIIDQYEFRKETILEILHSHGINISKLSAVCGRGGLLRPIEGGTYTVNEAMLEDLKNGYSGHHASNLGGILAYEIASGLNIPAFIVDPVVVDEMEPIARISGIAGMERKSIFHALNQKAVARKVAAEIGHKYEDLNLIIAHMGGGITVGAHKNGKVIDVNNGLNGEGPFSPERAGTVPVGQLIEMCFSGNYYRDEMMKKIVGQGGLVSLIGTNDAIKVENMVEKGDPEATLIYKAMAYQVAKEIGGASAVLHGKIDAIVLTGGLAYSKILINEIKERVNWIADVIVHPGEDELQALAEGALRVLREEEAPKEYVVREKETVARG.

It belongs to the acetokinase family.

The protein resides in the cytoplasm. It catalyses the reaction butanoate + ATP = butanoyl phosphate + ADP. The sequence is that of Probable butyrate kinase from Bacillus cytotoxicus (strain DSM 22905 / CIP 110041 / 391-98 / NVH 391-98).